Here is a 662-residue protein sequence, read N- to C-terminus: UvrABC system protein B (662 aa).

The Helicase ATP-binding domain occupies 25 to 182 (KGIEKGEKFQ…KKLVEIQYER (158 aa)). 38–45 (GVTGSGKT) lines the ATP pocket. The Beta-hairpin motif lies at 91–114 (YYDYYQPEAYVAQSDTYIEKDASI). The Helicase C-terminal domain maps to 429 to 595 (QIDDLYTSIQ…TIIKDIREVI (167 aa)). Positions 622–657 (DKLIEKYEEEMKEAAQNLQFEKAAHLRDVIYKLKRD) constitute a UVR domain.

This sequence belongs to the UvrB family. In terms of assembly, forms a heterotetramer with UvrA during the search for lesions. Interacts with UvrC in an incision complex.

It localises to the cytoplasm. Functionally, the UvrABC repair system catalyzes the recognition and processing of DNA lesions. A damage recognition complex composed of 2 UvrA and 2 UvrB subunits scans DNA for abnormalities. Upon binding of the UvrA(2)B(2) complex to a putative damaged site, the DNA wraps around one UvrB monomer. DNA wrap is dependent on ATP binding by UvrB and probably causes local melting of the DNA helix, facilitating insertion of UvrB beta-hairpin between the DNA strands. Then UvrB probes one DNA strand for the presence of a lesion. If a lesion is found the UvrA subunits dissociate and the UvrB-DNA preincision complex is formed. This complex is subsequently bound by UvrC and the second UvrB is released. If no lesion is found, the DNA wraps around the other UvrB subunit that will check the other stand for damage. This chain is UvrABC system protein B, found in Clostridium botulinum (strain Loch Maree / Type A3).